The following is a 219-amino-acid chain: Large ribosomal subunit protein uL4 (219 aa).

The segment at 43-100 (AAKRQGTHSTKTRGEVSGGGKKPYRQKGTGRARQGSTRAPQFTGGGTVHGPQPRDYSQ) is disordered.

It belongs to the universal ribosomal protein uL4 family. In terms of assembly, part of the 50S ribosomal subunit.

Its function is as follows. One of the primary rRNA binding proteins, this protein initially binds near the 5'-end of the 23S rRNA. It is important during the early stages of 50S assembly. It makes multiple contacts with different domains of the 23S rRNA in the assembled 50S subunit and ribosome. Forms part of the polypeptide exit tunnel. The protein is Large ribosomal subunit protein uL4 of Mycobacterium sp. (strain JLS).